A 404-amino-acid polypeptide reads, in one-letter code: Argininosuccinate synthase (404 aa).

Residues 11–19 (AYSGGLDTS) and Ala-40 contribute to the ATP site. Residues Tyr-92 and Ser-97 each contribute to the L-citrulline site. ATP is bound at residue Gly-122. The L-aspartate site is built by Thr-124, Asn-128, and Asp-129. Residue Asn-128 coordinates L-citrulline. L-citrulline contacts are provided by Arg-132, Ser-181, Ser-190, Glu-266, and Tyr-278.

Belongs to the argininosuccinate synthase family. Type 1 subfamily. Homotetramer.

Its subcellular location is the cytoplasm. It carries out the reaction L-citrulline + L-aspartate + ATP = 2-(N(omega)-L-arginino)succinate + AMP + diphosphate + H(+). The protein operates within amino-acid biosynthesis; L-arginine biosynthesis; L-arginine from L-ornithine and carbamoyl phosphate: step 2/3. This chain is Argininosuccinate synthase, found in Moritella abyssi.